A 1410-amino-acid polypeptide reads, in one-letter code: non-specific serine/threonine protein kinase (1410 aa).

The region spanning 27–299 (THYVSQLNNS…LLEKYRTIYF (273 aa)) is the Protein kinase domain. Residues 33 to 41 (LNNSRFLKT) and K54 contribute to the ATP site. The Proton acceptor role is filled by D147. 5 HEAT repeats span residues 441–478 (TKLD…EVKH), 485–525 (NIFV…KANL), 556–594 (RKLQ…YFGR), 596–633 (KTND…LLGP), and 635–672 (TMEQ…TRFV). 3 WD repeats span residues 1037 to 1076 (FDGT…NEKS), 1187 to 1226 (ADYG…QIRA), and 1230 to 1273 (GESL…CKHV).

This sequence belongs to the protein kinase superfamily. Ser/Thr protein kinase family. In terms of assembly, component of the autophagy-specific VPS34 PI3-kinase complex I composed of VPS15, VPS30, VPS34, ATG14 and ATG38; and of the VPS34 PI3-kinase complex II composed of VPS15, VPS30, VPS34 and VPS38. Post-translationally, autophosphorylated.

The protein localises to the golgi apparatus. The protein resides in the trans-Golgi network membrane. It is found in the endosome membrane. It carries out the reaction L-seryl-[protein] + ATP = O-phospho-L-seryl-[protein] + ADP + H(+). The enzyme catalyses L-threonyl-[protein] + ATP = O-phospho-L-threonyl-[protein] + ADP + H(+). Serine/threonine-protein kinase that plays a role in signaling in modulation of host immune response, intracellular survival and virulence. Required for impediment of phagosomal maturation in THP-1 macrophages. Regulatory subunit of the autophagy-specific VPS34 PI3-kinase complex I essential to recruit the ATG8-phosphatidylinositol conjugate and the ATG12-ATG5 conjugate to the pre-autophagosomal structure. Within the PS34 PI3-kinase complex I, VPS15-mediated phosphorylation of VPS34 may be required for recruiting VPS34 to the membrane but not for activation of its PI3K activity. Is also involved in endosome-to-Golgi retrograde transport as part of the VPS34 PI3-kinase complex II. This second complex is required for the endosome-to-Golgi retrieval of PEP1 and KEX2, and the recruitment of VPS5 and VPS7, two components of the retromer complex, to endosomal membranes (probably through the synthesis of a specific pool of phosphatidylinositol 3-phosphate recruiting the retromer to the endosomes). By regulating VPS34 kinase activity, VPS15 appears to be essential for the efficient delivery of soluble hydrolases to the yeast vacuole. The sequence is that of non-specific serine/threonine protein kinase from Candida glabrata (strain ATCC 2001 / BCRC 20586 / JCM 3761 / NBRC 0622 / NRRL Y-65 / CBS 138) (Yeast).